Consider the following 76-residue polypeptide: Protein CsbA (76 aa).

The Extracellular segment spans residues 1–5 (MITKA). A helical membrane pass occupies residues 6–22 (VFALFFPFMLVVLFTRV). Residues 23-27 (TFNHY) lie on the Cytoplasmic side of the membrane. A helical transmembrane segment spans residues 28-44 (VAIALTAALLFASYLKG). Over 45–49 (YTETY) the chain is Extracellular. Residues 50-66 (FIVGLDVVSLVAGGLYM) form a helical membrane-spanning segment. The Cytoplasmic portion of the chain corresponds to 67 to 76 (AKKAAEKKEE).

The protein localises to the cell membrane. The polypeptide is Protein CsbA (csbA) (Bacillus subtilis (strain 168)).